A 41-amino-acid chain; its full sequence is Large ribosomal subunit protein bL36 (41 aa).

This sequence belongs to the bacterial ribosomal protein bL36 family.

This chain is Large ribosomal subunit protein bL36, found in Opitutus terrae (strain DSM 11246 / JCM 15787 / PB90-1).